A 181-amino-acid chain; its full sequence is ATP-dependent protease subunit HslV (181 aa).

The active site involves Thr5. 3 residues coordinate Na(+): Ser162, Cys165, and Thr168.

This sequence belongs to the peptidase T1B family. HslV subfamily. A double ring-shaped homohexamer of HslV is capped on each side by a ring-shaped HslU homohexamer. The assembly of the HslU/HslV complex is dependent on binding of ATP.

The protein resides in the cytoplasm. The catalysed reaction is ATP-dependent cleavage of peptide bonds with broad specificity.. With respect to regulation, allosterically activated by HslU binding. Protease subunit of a proteasome-like degradation complex believed to be a general protein degrading machinery. This is ATP-dependent protease subunit HslV from Campylobacter hominis (strain ATCC BAA-381 / DSM 21671 / CCUG 45161 / LMG 19568 / NCTC 13146 / CH001A).